We begin with the raw amino-acid sequence, 861 residues long: FO synthase (861 aa).

Radical SAM core domains lie at 69–319 (ITYS…LQAP) and 528–763 (VTYI…LLHP). The tract at residues 70–401 (TYSKSVFIPL…PRLLPHVRAL (332 aa)) is cofG-like. Positions 83, 87, 90, 542, 546, and 549 each coordinate [4Fe-4S] cluster. Residues 505–838 (DGPALDALTR…KPRTTLYGEV (334 aa)) form a cofH-like region.

The protein in the N-terminal section; belongs to the radical SAM superfamily. CofG family. In the C-terminal section; belongs to the radical SAM superfamily. CofH family. Requires [4Fe-4S] cluster as cofactor.

The enzyme catalyses 5-amino-6-(D-ribitylamino)uracil + L-tyrosine + S-adenosyl-L-methionine = 5-amino-5-(4-hydroxybenzyl)-6-(D-ribitylimino)-5,6-dihydrouracil + 2-iminoacetate + 5'-deoxyadenosine + L-methionine + H(+). It carries out the reaction 5-amino-5-(4-hydroxybenzyl)-6-(D-ribitylimino)-5,6-dihydrouracil + S-adenosyl-L-methionine = 7,8-didemethyl-8-hydroxy-5-deazariboflavin + 5'-deoxyadenosine + L-methionine + NH4(+) + H(+). The protein operates within cofactor biosynthesis; coenzyme F0 biosynthesis. Its function is as follows. Catalyzes the radical-mediated synthesis of 7,8-didemethyl-8-hydroxy-5-deazariboflavin (FO) from 5-amino-6-(D-ribitylamino)uracil and L-tyrosine. The sequence is that of FO synthase (fbiC) from Streptomyces avermitilis (strain ATCC 31267 / DSM 46492 / JCM 5070 / NBRC 14893 / NCIMB 12804 / NRRL 8165 / MA-4680).